The following is a 691-amino-acid chain: Guanylate cyclase soluble subunit alpha-1 (691 aa).

The segment at proline 26–threonine 65 is disordered. One can recognise a Guanylate cyclase domain in the interval threonine 482–glutamate 609.

Belongs to the adenylyl cyclase class-4/guanylyl cyclase family. As to quaternary structure, heterodimer of an alpha and a beta chain.

The protein resides in the cytoplasm. It carries out the reaction GTP = 3',5'-cyclic GMP + diphosphate. Its activity is regulated as follows. Activated by nitric oxide in the presence of magnesium or manganese ions. The protein is Guanylate cyclase soluble subunit alpha-1 (GUCY1A1) of Bos taurus (Bovine).